The following is a 163-amino-acid chain: MRRILSVLLENESGALSRVIGLFSQRGYNIESLTVAPTDDPTLSRMTIQTVGDEKVLEQIEKQLHKLVDVLRVSELGQGAHVEREIMLVKIQASGYGREEVKRNTEIFRGQIIDVTPTLYTVQLAGTSDKLDAFLASLRDVAKIVEVARSGVVGLSRGDKIMR.

The region spanning 4 to 78 (ILSVLLENES…DVLRVSELGQ (75 aa)) is the ACT domain.

It belongs to the acetolactate synthase small subunit family. As to quaternary structure, dimer of large and small chains.

It catalyses the reaction 2 pyruvate + H(+) = (2S)-2-acetolactate + CO2. The protein operates within amino-acid biosynthesis; L-isoleucine biosynthesis; L-isoleucine from 2-oxobutanoate: step 1/4. It participates in amino-acid biosynthesis; L-valine biosynthesis; L-valine from pyruvate: step 1/4. With respect to regulation, sensitive to valine inhibition. In Salmonella typhimurium (strain LT2 / SGSC1412 / ATCC 700720), this protein is Acetolactate synthase isozyme 3 small subunit (ilvH).